The primary structure comprises 43 residues: Protein PsbN (43 aa).

A helical membrane pass occupies residues 5–27; sequence TLVAISISGSLVSFTGYALYTAF.

The protein belongs to the PsbN family.

Its subcellular location is the plastid. It is found in the chloroplast thylakoid membrane. Functionally, may play a role in photosystem I and II biogenesis. This chain is Protein PsbN, found in Lactoris fernandeziana.